We begin with the raw amino-acid sequence, 207 residues long: Holliday junction branch migration complex subunit RuvA (207 aa).

Residues 1 to 64 are domain I; it reads MIGRLRGNLL…EDAQLLYGFN (64 aa). The segment at 65–143 is domain II; sequence TKNERALFRE…GWGAGDLFTP (79 aa). The tract at residues 144–158 is flexible linker; that stretch reads ATDAAPMDDGSEFIT. The interval 159-207 is domain III; it reads SPQSAVDEAVSALIALGYKPQQASKTVSQVAKPDMTSEVLIRESLKSMI.

The protein belongs to the RuvA family. In terms of assembly, homotetramer. Forms an RuvA(8)-RuvB(12)-Holliday junction (HJ) complex. HJ DNA is sandwiched between 2 RuvA tetramers; dsDNA enters through RuvA and exits via RuvB. An RuvB hexamer assembles on each DNA strand where it exits the tetramer. Each RuvB hexamer is contacted by two RuvA subunits (via domain III) on 2 adjacent RuvB subunits; this complex drives branch migration. In the full resolvosome a probable DNA-RuvA(4)-RuvB(12)-RuvC(2) complex forms which resolves the HJ.

It localises to the cytoplasm. In terms of biological role, the RuvA-RuvB-RuvC complex processes Holliday junction (HJ) DNA during genetic recombination and DNA repair, while the RuvA-RuvB complex plays an important role in the rescue of blocked DNA replication forks via replication fork reversal (RFR). RuvA specifically binds to HJ cruciform DNA, conferring on it an open structure. The RuvB hexamer acts as an ATP-dependent pump, pulling dsDNA into and through the RuvAB complex. HJ branch migration allows RuvC to scan DNA until it finds its consensus sequence, where it cleaves and resolves the cruciform DNA. In Aliivibrio fischeri (strain MJ11) (Vibrio fischeri), this protein is Holliday junction branch migration complex subunit RuvA.